Reading from the N-terminus, the 124-residue chain is MATINQLVRKPRAKKVEKSNVPALEACPQKRGVCTRVYTTTPKKPNSALRKVCRVRLTNGFEVTSYIGGEGHNLQEHSVILIRGGRVKDLPGVRYHTVRGALDCSGVKDRKQSRSKYGVKRPKA.

Asp89 carries the post-translational modification 3-methylthioaspartic acid.

Belongs to the universal ribosomal protein uS12 family. Part of the 30S ribosomal subunit. Contacts proteins S8 and S17. May interact with IF1 in the 30S initiation complex.

Its function is as follows. With S4 and S5 plays an important role in translational accuracy. In terms of biological role, interacts with and stabilizes bases of the 16S rRNA that are involved in tRNA selection in the A site and with the mRNA backbone. Located at the interface of the 30S and 50S subunits, it traverses the body of the 30S subunit contacting proteins on the other side and probably holding the rRNA structure together. The combined cluster of proteins S8, S12 and S17 appears to hold together the shoulder and platform of the 30S subunit. This chain is Small ribosomal subunit protein uS12, found in Edwardsiella ictaluri (strain 93-146).